The primary structure comprises 177 residues: Myosin regulatory light chain 2 (177 aa).

Residues 1–16 (MSRKSGSRSSSKRSKK) are compositionally biased toward basic residues. Residues 1–24 (MSRKSGSRSSSKRSKKSGGGSNVF) form a disordered region. 6 igE-binding epitope regions span residues 13–30 (RSKK…FTQR), 22–48 (NVFD…DKDG), 49–66 (VIGK…GRIA), 58–90 (TFDE…LLNM), 79–99 (PAPI…TGES), and 118–141 (NIDC…QEAD). Positions 30-65 (RQVAEFKEGFQLMDRDKDGVIGKTDLRGTFDEIGRI) constitute an EF-hand 1 domain. Positions 43, 45, 47, and 54 each coordinate Ca(2+). The EF-hand 2 domain maps to 135–170 (FSSQEADDALDQMDIDDGGKIDVQGVIQMLTAGGGD).

In terms of assembly, myosin is a hexamer of 2 heavy chains and 4 light chains. Expressed in tail muscle (at protein level).

This is Myosin regulatory light chain 2 from Penaeus vannamei (Whiteleg shrimp).